The sequence spans 434 residues: SPARC-related modular calcium-binding protein 1 (434 aa).

The signal sequence occupies residues Met1–Gly26. The 53-residue stretch at Ser37–Asp89 folds into the Kazal-like domain. Cystine bridges form between Cys43/Cys74, Cys47/Cys67, Cys56/Cys87, Cys95/Cys118, Cys129/Cys136, and Cys138/Cys158. The region spanning Gln92–Cys158 is the Thyroglobulin type-1 1 domain. The span at Ser149–Ser172 shows a compositional bias: polar residues. Residues Ser149–Phe191 form a disordered region. Asn214 carries N-linked (GlcNAc...) asparagine glycosylation. In terms of domain architecture, Thyroglobulin type-1 2 spans Val224–Cys292. 3 disulfide bridges follow: Cys227-Cys251, Cys262-Cys269, and Cys271-Cys292. EF-hand domains are found at residues Leu359–Lys394 and Lys396–Gly431. Ca(2+) contacts are provided by Asp372, Asn374, Ser376, Asp378, Glu383, Asp409, Asn411, Asp413, and Glu420. A glycan (N-linked (GlcNAc...) asparagine) is linked at Asn374.

Post-translationally, glycosylated. Widely expressed in many tissues with a strongest signal in ovary. No expression in spleen.

Its subcellular location is the secreted. The protein localises to the extracellular space. It is found in the extracellular matrix. It localises to the basement membrane. Functionally, plays essential roles in both eye and limb development. Probable regulator of osteoblast differentiation. This Homo sapiens (Human) protein is SPARC-related modular calcium-binding protein 1 (SMOC1).